The sequence spans 460 residues: MNTSVPPAVSPNITVLAPGKGPWQVAFIGITTGLLSLATVTGNLLVLISFKVNTELKTVNNYFLLSLACADLIIGTFSMNLYTTYLLMGHWALGTLACDLWLALDYVASNASVMNLLLISFDRYFSVTRPLSYRAKRTPRRAALMIGLAWLVSFVLWAPAILFWQYLVGERTVLAGQCYIQFLSQPIITFGTAMAAFYLPVTVMCTLYWRIYRETENRARELAALQGSETPGKGGGSSSSSERSQPGAEGSPESPPGRCCRCCRAPRLLQAYSWKEEEEEDEGSMESLTSSEGEEPGSEVVIKMPMVDPEAQAPTKQPPKSSPNTVKRPTKKGRDRGGKGQKPRGKEQLAKRKTFSLVKEKKAARTLSAILLAFILTWTPYNIMVLVSTFCKDCVPETLWELGYWLCYVNSTVNPMCYALCNKAFRDTFRLLLLCRWDKRRWRKIPKRPGSVHRTPSRQC.

Over 1–22 (MNTSVPPAVSPNITVLAPGKGP) the chain is Extracellular. Residues N2 and N12 are each glycosylated (N-linked (GlcNAc...) asparagine). The chain crosses the membrane as a helical span at residues 23–48 (WQVAFIGITTGLLSLATVTGNLLVLI). Residues 49–62 (SFKVNTELKTVNNY) lie on the Cytoplasmic side of the membrane. A helical membrane pass occupies residues 63 to 84 (FLLSLACADLIIGTFSMNLYTT). Residues 85 to 95 (YLLMGHWALGT) lie on the Extracellular side of the membrane. A helical transmembrane segment spans residues 96–121 (LACDLWLALDYVASNASVMNLLLISF). Cysteines 98 and 178 form a disulfide. Residues 122-142 (DRYFSVTRPLSYRAKRTPRRA) are Cytoplasmic-facing. A helical membrane pass occupies residues 143 to 164 (ALMIGLAWLVSFVLWAPAILFW). Residues 165-185 (QYLVGERTVLAGQCYIQFLSQ) lie on the Extracellular side of the membrane. A helical membrane pass occupies residues 186–209 (PIITFGTAMAAFYLPVTVMCTLYW). Over 210–366 (RIYRETENRA…LVKEKKAART (157 aa)) the chain is Cytoplasmic. Disordered regions lie at residues 225–257 (LQGSETPGKGGGSSSSSERSQPGAEGSPESPPG), 274–297 (WKEEEEEDEGSMESLTSSEGEEPG), and 310–351 (EAQA…QLAK). T230 carries the phosphothreonine modification. Positions 238–257 (SSSSERSQPGAEGSPESPPG) are enriched in low complexity. A Phosphoserine modification is found at S254. A compositionally biased stretch (basic residues) spans 328–343 (RPTKKGRDRGGKGQKP). A helical membrane pass occupies residues 367-390 (LSAILLAFILTWTPYNIMVLVSTF). Residues 391 to 397 (CKDCVPE) are Extracellular-facing. The chain crosses the membrane as a helical span at residues 398 to 420 (TLWELGYWLCYVNSTVNPMCYAL). Topologically, residues 421-460 (CNKAFRDTFRLLLLCRWDKRRWRKIPKRPGSVHRTPSRQC) are cytoplasmic. A Phosphoserine modification is found at S451. T455 carries the phosphothreonine modification. S457 bears the Phosphoserine mark.

Belongs to the G-protein coupled receptor 1 family. Muscarinic acetylcholine receptor subfamily. CHRM1 sub-subfamily. In terms of assembly, interacts with GPRASP2. Interacts with TMEM147.

Its subcellular location is the cell membrane. It is found in the postsynaptic cell membrane. In terms of biological role, the muscarinic acetylcholine receptor mediates various cellular responses, including inhibition of adenylate cyclase, breakdown of phosphoinositides and modulation of potassium channels through the action of G proteins. Primary transducing effect is Pi turnover. In Mus musculus (Mouse), this protein is Muscarinic acetylcholine receptor M1 (Chrm1).